The primary structure comprises 270 residues: Putative postmeiotic segregation increased 2-like protein 11 (270 aa).

The protein belongs to the DNA mismatch repair MutL/HexB family.

This chain is Putative postmeiotic segregation increased 2-like protein 11 (PMS2P11), found in Homo sapiens (Human).